Consider the following 356-residue polypeptide: Phosphatidylglycerol--prolipoprotein diacylglyceryl transferase (356 aa).

Transmembrane regions (helical) follow at residues 24 to 44 (IKWY…LACV), 59 to 79 (WFVF…SFII), 103 to 123 (LAIE…FPLV), and 144 to 164 (VSMW…QIIG). Arg165 lines the a 1,2-diacyl-sn-glycero-3-phospho-(1'-sn-glycerol) pocket. The next 2 membrane-spanning stretches (helical) occupy residues 209-229 (PFFL…YIGG) and 265-285 (FATS…LLVC).

This sequence belongs to the Lgt family.

Its subcellular location is the cell membrane. The enzyme catalyses L-cysteinyl-[prolipoprotein] + a 1,2-diacyl-sn-glycero-3-phospho-(1'-sn-glycerol) = an S-1,2-diacyl-sn-glyceryl-L-cysteinyl-[prolipoprotein] + sn-glycerol 1-phosphate + H(+). It functions in the pathway protein modification; lipoprotein biosynthesis (diacylglyceryl transfer). In terms of biological role, catalyzes the transfer of the diacylglyceryl group from phosphatidylglycerol to the sulfhydryl group of the N-terminal cysteine of a prolipoprotein, the first step in the formation of mature lipoproteins. This chain is Phosphatidylglycerol--prolipoprotein diacylglyceryl transferase, found in Malacoplasma penetrans (strain HF-2) (Mycoplasma penetrans).